A 119-amino-acid chain; its full sequence is UPF0102 protein HI_1656 (119 aa).

The protein belongs to the UPF0102 family.

This is UPF0102 protein HI_1656 from Haemophilus influenzae (strain ATCC 51907 / DSM 11121 / KW20 / Rd).